Consider the following 340-residue polypeptide: Beta-D-galactofuranosidase xynD (340 aa).

Residues 1-24 (MKHHNYYPSTCLSILPFLLPLTMS) form the signal peptide. Catalysis depends on Asp-51, which acts as the Proton acceptor. N-linked (GlcNAc...) asparagine glycosylation is found at Asn-96 and Asn-165. Glu-222 (proton donor) is an active-site residue. N-linked (GlcNAc...) asparagine glycosylation is found at Asn-302 and Asn-328.

The protein belongs to the glycosyl hydrolase 43 family.

The protein resides in the secreted. Its pathway is glycan degradation. In terms of biological role, glycoside hydrolase family 43 beta-D-galactofuranosidase involved in the degradation of beta-galactofuranoside (Galf)-containing glycans such as galactomannan or O-glycans. Is not active on beta-1,5- or beta-1,6-linked beta-D-galactofuranose (Galf) residues. This chain is Beta-D-galactofuranosidase xynD, found in Aspergillus niger (strain ATCC MYA-4892 / CBS 513.88 / FGSC A1513).